The primary structure comprises 280 residues: Protoheme IX farnesyltransferase (280 aa).

9 helical membrane passes run 2–21 (VVAT…RAGL), 30–50 (AAVP…VVSG), 83–103 (LALW…LVGV), 105–125 (ATTG…YTPL), 131–151 (LSLP…WTSV), 160–180 (FLLF…ISLF), 206–226 (IVGY…LGVA), 229–249 (VYLG…VYGL), and 260–280 (QVFF…MIGA).

The protein belongs to the UbiA prenyltransferase family. Protoheme IX farnesyltransferase subfamily.

It localises to the cell inner membrane. It carries out the reaction heme b + (2E,6E)-farnesyl diphosphate + H2O = Fe(II)-heme o + diphosphate. Its pathway is porphyrin-containing compound metabolism; heme O biosynthesis; heme O from protoheme: step 1/1. In terms of biological role, converts heme B (protoheme IX) to heme O by substitution of the vinyl group on carbon 2 of heme B porphyrin ring with a hydroxyethyl farnesyl side group. The sequence is that of Protoheme IX farnesyltransferase from Sorangium cellulosum (strain So ce56) (Polyangium cellulosum (strain So ce56)).